Consider the following 170-residue polypeptide: Microfibrillar-associated protein 5 (170 aa).

The signal sequence occupies residues 1-20; sequence MTFFGPKVLLLLTALIMSSG. The Cell attachment site motif lies at 30–32; the sequence is RGD. Asn-76 is a glycosylation site (N-linked (GlcNAc...) asparagine).

This sequence belongs to the MFAP family. As to quaternary structure, interacts with TGFB2. Interacts with BMP2. Interacts with FBN1 (via N-terminal domain) and FBN2. In terms of processing, forms intermolecular disulfide bonds either with other MAGP-2 molecules or with other components of the microfibrils. Associated with fibrillin-containing microfibrils of the developing nuchal ligament.

The protein localises to the secreted. It is found in the extracellular space. Its subcellular location is the extracellular matrix. May play a role in hematopoiesis. In the cardiovascular system, could regulate growth factors or participate in cell signaling in maintaining large vessel integrity. Component of the elastin-associated microfibrils. The sequence is that of Microfibrillar-associated protein 5 (MFAP5) from Bos taurus (Bovine).